The sequence spans 963 residues: Iron-responsive element-binding protein 2 (963 aa).

[4Fe-4S] cluster-binding residues include Cys-512, Cys-578, and Cys-581.

The protein belongs to the aconitase/IPM isomerase family. As to quaternary structure, interacts with RBCK1 only in iron-rich conditions. Interacts (when associated with the 4Fe-4S) with FBXL5. Interacts with CIAO1 and CIAO2A. Requires [4Fe-4S] cluster as cofactor. Ubiquitinated and degraded by the proteasome in presence of high level of iron and oxygen. Ubiquitinated by a SCF complex containing FBXL5. Upon iron and oxygen depletion FBXL5 is degraded, preventing ubiquitination and allowing its RNA-binding activity. As to expression, ubiquitously expressed in rat tissues, the highest amounts present in skeletal muscle and heart.

It is found in the cytoplasm. Its function is as follows. RNA-binding protein that binds to iron-responsive elements (IRES), which are stem-loop structures found in the 5'-UTR of ferritin, and delta aminolevulinic acid synthase mRNAs, and in the 3'-UTR of transferrin receptor mRNA. Binding to the IRE element in ferritin results in the repression of its mRNA translation. Binding of the protein to the transferrin receptor mRNA inhibits the degradation of this otherwise rapidly degraded mRNA. This Rattus norvegicus (Rat) protein is Iron-responsive element-binding protein 2 (Ireb2).